A 229-amino-acid chain; its full sequence is Ribonuclease S-6 (229 aa).

Positions 1 to 27 are cleaved as a signal peptide; the sequence is MGITGMIYMVPMVFSLIVLISCSSTMG. Glutamine 36 contacts RNA. Cysteines 42 and 49 form a disulfide. Residue histidine 60 participates in RNA binding. Histidine 60 acts as the Proton donor in catalysis. Cysteine 75 and cysteine 119 are oxidised to a cystine. N-linked (GlcNAc) asparagine glycosylation is found at asparagine 77 and asparagine 87. Residues 98–99, phenylalanine 108, 111–112, and 115–116 each bind RNA; these read NV, RQ, and KH. Residue glutamine 112 is part of the active site. The active-site Proton acceptor is the histidine 116. Asparagine 145 is a glycosylation site (N-linked (GlcNAc...) (high mannose) asparagine). 2 disulfide bridges follow: cysteine 184–cysteine 222 and cysteine 199–cysteine 210. Asparagine 188 is a glycosylation site (N-linked (GlcNAc) asparagine; alternate). N-linked (GlcNAc...) asparagine; alternate glycans are attached at residues asparagine 188 and asparagine 203.

It belongs to the RNase T2 family. The N-glycans attached at Asn-188 and Asn-203 consist of either monosaccharide (GlcNAc) or disaccharide (GlcNAc-GlcNAc) that could not be distinguished.

It catalyses the reaction a ribonucleotidyl-ribonucleotide-RNA + H2O = a 3'-end 3'-phospho-ribonucleotide-RNA + a 5'-end dephospho-ribonucleoside-RNA + H(+). Self-incompatibility (SI) is the inherited ability of a flowering plant to prevent self-fertilization by discriminating between self and non-self pollen during pollination. In many species, self-incompatibility is controlled by the single, multiallelic locus S. This chain is Ribonuclease S-6, found in Pyrus pyrifolia (Chinese pear).